The following is a 503-amino-acid chain: Putative cytochrome P450 71A28 (503 aa).

The helical transmembrane segment at 1–21 threads the bilayer; it reads MILISLCFTTFLAFLFLNPLL. C443 serves as a coordination point for heme.

The protein belongs to the cytochrome P450 family. The cofactor is heme.

The protein resides in the membrane. This is Putative cytochrome P450 71A28 (CYP71A28) from Arabidopsis thaliana (Mouse-ear cress).